The following is a 92-amino-acid chain: MALPQISTADQAKLQLMQEMEIEMMSDLYNRMTNACHKKCIPPRYSESELGKGEMVCIDRCVAKYLDIHEKIGKKLTAMSMQDEELMKKMSS.

The short motif at 36-61 (CHKKCIPPRYSESELGKGEMVCIDRC) is the Twin CX3C motif element. Disulfide bonds link cysteine 36-cysteine 61 and cysteine 40-cysteine 57.

Belongs to the small Tim family. Heterohexamer; composed of 3 copies of Tim9 and 3 copies of Tim10, named soluble 70 kDa complex. The complex associates with the Tim22 component of the TIM22 complex. Interacts with multi-pass transmembrane proteins in transit.

The protein resides in the mitochondrion inner membrane. In terms of biological role, mitochondrial intermembrane chaperone that participates in the import and insertion of multi-pass transmembrane proteins into the mitochondrial inner membrane. May also be required for the transfer of beta-barrel precursors from the TOM complex to the sorting and assembly machinery (SAM complex) of the outer membrane. Acts as a chaperone-like protein that protects the hydrophobic precursors from aggregation and guide them through the mitochondrial intermembrane space. This Drosophila melanogaster (Fruit fly) protein is Mitochondrial import inner membrane translocase subunit Tim10 (Tim10).